Reading from the N-terminus, the 372-residue chain is F-box/kelch-repeat protein At5g48990 (372 aa).

The F-box domain occupies 14–60 (SSPNPSLPEDLIVSILARVSRSYYTNLSVVSKTFRSILTSPELYKTR). Residues 176 to 222 (RTYFPGSSEKPDSLNCVEVYNTNTQTWNPVPPQKRKLKFGNMEGKIY) form a Kelch repeat.

The polypeptide is F-box/kelch-repeat protein At5g48990 (Arabidopsis thaliana (Mouse-ear cress)).